Consider the following 655-residue polypeptide: Putative calcium up-regulated protein J (655 aa).

The 142-residue stretch at 40–181 folds into the Ricin B-type lectin domain; the sequence is KSRAMLKGDN…DNVCFQWDLE (142 aa).

It belongs to the cup family.

This Dictyostelium discoideum (Social amoeba) protein is Putative calcium up-regulated protein J (cupJ).